Here is a 155-residue protein sequence, read N- to C-terminus: Ribosomal RNA large subunit methyltransferase H (155 aa).

S-adenosyl-L-methionine-binding positions include leucine 73, glycine 104, and leucine 123 to leucine 128.

The protein belongs to the RNA methyltransferase RlmH family. In terms of assembly, homodimer.

Its subcellular location is the cytoplasm. It catalyses the reaction pseudouridine(1915) in 23S rRNA + S-adenosyl-L-methionine = N(3)-methylpseudouridine(1915) in 23S rRNA + S-adenosyl-L-homocysteine + H(+). Its function is as follows. Specifically methylates the pseudouridine at position 1915 (m3Psi1915) in 23S rRNA. The polypeptide is Ribosomal RNA large subunit methyltransferase H (Pseudomonas aeruginosa (strain LESB58)).